Here is a 685-residue protein sequence, read N- to C-terminus: Threonine--tRNA ligase (685 aa).

Residues 1 to 65 (MSTPASAAPA…DTDVEVEPVA (65 aa)) enclose the TGS domain. The catalytic stretch occupies residues 262-568 (DHRKLGSELD…LTEHYAGAFP (307 aa)). Zn(2+) contacts are provided by cysteine 367, histidine 418, and histidine 545.

The protein belongs to the class-II aminoacyl-tRNA synthetase family. In terms of assembly, homodimer. Zn(2+) serves as cofactor.

The protein localises to the cytoplasm. It carries out the reaction tRNA(Thr) + L-threonine + ATP = L-threonyl-tRNA(Thr) + AMP + diphosphate + H(+). Catalyzes the attachment of threonine to tRNA(Thr) in a two-step reaction: L-threonine is first activated by ATP to form Thr-AMP and then transferred to the acceptor end of tRNA(Thr). Also edits incorrectly charged L-seryl-tRNA(Thr). In Rhodococcus jostii (strain RHA1), this protein is Threonine--tRNA ligase.